Here is a 1232-residue protein sequence, read N- to C-terminus: DNA-directed RNA polymerase subunit beta (1232 aa).

The segment at 1170 to 1232 (SVDEDADELE…LDLDDFGDEH (63 aa)) is disordered. Residues 1171–1180 (VDEDADELEV) show a composition bias toward acidic residues. Residues 1189–1198 (PEEKEEKEKE) show a composition bias toward basic and acidic residues. Over residues 1199–1232 (DSDEYDDLREEDVEPDLEELSLDDLDLDDFGDEH) the composition is skewed to acidic residues.

It belongs to the RNA polymerase beta chain family. In terms of assembly, the RNAP catalytic core consists of 2 alpha, 1 beta, 1 beta' and 1 omega subunit. When a sigma factor is associated with the core the holoenzyme is formed, which can initiate transcription.

The enzyme catalyses RNA(n) + a ribonucleoside 5'-triphosphate = RNA(n+1) + diphosphate. DNA-dependent RNA polymerase catalyzes the transcription of DNA into RNA using the four ribonucleoside triphosphates as substrates. The sequence is that of DNA-directed RNA polymerase subunit beta from Clostridium botulinum (strain Hall / ATCC 3502 / NCTC 13319 / Type A).